A 199-amino-acid polypeptide reads, in one-letter code: Recombination protein RecR (199 aa).

The segment at 58 to 73 adopts a C4-type zinc-finger fold; the sequence is CRICYNITDTEVCNIC. Positions 81–176 constitute a Toprim domain; sequence SLICVVSHPM…KVTRIAHGVP (96 aa).

Belongs to the RecR family.

May play a role in DNA repair. It seems to be involved in an RecBC-independent recombinational process of DNA repair. It may act with RecF and RecO. This Thermoanaerobacter sp. (strain X514) protein is Recombination protein RecR.